A 732-amino-acid polypeptide reads, in one-letter code: Elongation factor 2 (732 aa).

The region spanning 19-260 (ERIRNIGIAA…MVVRHLPSPI (242 aa)) is the tr-type G domain. GTP contacts are provided by residues 28 to 35 (AHIDHGKT), 94 to 98 (DTPGH), and 148 to 151 (NKVD). Histidine 597 is modified (diphthamide).

Belongs to the TRAFAC class translation factor GTPase superfamily. Classic translation factor GTPase family. EF-G/EF-2 subfamily.

The protein resides in the cytoplasm. Its function is as follows. Catalyzes the GTP-dependent ribosomal translocation step during translation elongation. During this step, the ribosome changes from the pre-translocational (PRE) to the post-translocational (POST) state as the newly formed A-site-bound peptidyl-tRNA and P-site-bound deacylated tRNA move to the P and E sites, respectively. Catalyzes the coordinated movement of the two tRNA molecules, the mRNA and conformational changes in the ribosome. The chain is Elongation factor 2 (fusA) from Pyrococcus furiosus (strain ATCC 43587 / DSM 3638 / JCM 8422 / Vc1).